We begin with the raw amino-acid sequence, 316 residues long: Acetaldehyde dehydrogenase (316 aa).

11–14 provides a ligand contact to NAD(+); sequence SGNI. The active-site Acyl-thioester intermediate is Cys-131. NAD(+) contacts are provided by residues 162–170 and Asn-289; that span reads SAGPGTRAN.

It belongs to the acetaldehyde dehydrogenase family. As to quaternary structure, interacts with MhpE.

The catalysed reaction is acetaldehyde + NAD(+) + CoA = acetyl-CoA + NADH + H(+). It participates in aromatic compound metabolism; 3-phenylpropanoate degradation. Catalyzes the conversion of acetaldehyde to acetyl-CoA, using NAD(+) and coenzyme A. Is the final enzyme in the meta-cleavage pathway for the degradation of aromatic compounds. The sequence is that of Acetaldehyde dehydrogenase from Klebsiella pneumoniae (strain 342).